A 2498-amino-acid polypeptide reads, in one-letter code: Nuclear receptor corepressor 1 (2498 aa).

4 disordered regions span residues 1–38 (MSSS…QQEY), 54–84 (IQQQ…SGYD), 134–169 (SEVK…SKLS), and 198–223 (QQQL…VEQK). Composition is skewed to basic and acidic residues over residues 71 to 82 (PVSDRPQDRRSG), 134 to 148 (SEVK…KHES), and 204 to 213 (EAAKPPEPEK). The segment at 154–304 (SGQPGDDQDA…REQNICQRYD (151 aa)) is interaction with tbl1xr1-A. Residues 168-208 (LSKEELIQSMDRVDREIAKVEQQILKLKKKQQQLEEEAAKP) adopt a coiled-coil conformation. Positions 427–478 (QFMNVWTDHEKEIFKEKFVRHPKNFGLIASYLERKNVSDCVLYYYLTKKNEN) constitute an SANT 1 domain. Positions 483–493 (VRRNYPKRRGR) are enriched in basic residues. Disordered stretches follow at residues 483–649 (VRRN…GSKS), 668–912 (NLLQ…FGSR), 1075–1122 (SLSD…GTPG), 1417–1436 (DLVS…IMEG), 1470–1583 (SWGV…QRES), 1737–1851 (PGTQ…AQES), and 1916–1990 (PQME…TAHT). Basic and acidic residues-rich tracts occupy residues 502-525 (SQEE…KEDE) and 535-548 (KEEL…KIDA). Residues 502–552 (SQEEKEIEKVEEEKADRNDKKEDERREEEEKEEKEELREGAKDKIDAVAED) adopt a coiled-coil conformation. The span at 582-611 (ASEAAAANAVTTATTAPVTTTSTATTVAPV) shows a compositional bias: low complexity. Over residues 612 to 627 (PVAPPPEEPTPPPPPQ) the composition is skewed to pro residues. The region spanning 628–665 (EQSLVDHGRNWGAIAKMVGSKSESQCKNFYFNYKRRHN) is the SANT 2 domain. Positions 689–699 (QCDSIASTVSA) are enriched in polar residues. A compositionally biased stretch (acidic residues) spans 700–719 (QEDDENEASNEEENPEDSEG). Composition is skewed to low complexity over residues 727-738 (ESAPSPSPAEAA) and 761-774 (DAAS…SPSP). The segment covering 854 to 863 (MERLMDRAEA) has biased composition (basic and acidic residues). Polar residues-rich tracts occupy residues 872-891 (QNIS…SATC) and 1102-1122 (ATSS…GTPG). The span at 1484 to 1501 (KMGERSKHEDTKSSDAIR) shows a compositional bias: basic and acidic residues. The segment covering 1505–1516 (TSVVSSGPSVLR) has biased composition (polar residues). Low complexity predominate over residues 1545-1558 (PSPMSRSSPMARSA). Positions 1765 to 1804 (VSAERERERERERERDREREKEQRERESDRERERDRLAHA) form a coiled coil. The span at 1767–1802 (AERERERERERERDREREKEQRERESDRERERDRLA) shows a compositional bias: basic and acidic residues. Low complexity-rich tracts occupy residues 1803–1813 (HAAAAAAAASA) and 1820–1835 (RPVS…RPSS). The segment covering 1842–1851 (PSPSVRAQES) has biased composition (polar residues). The segment covering 1921–1942 (AKPKESKNDSARSEENLSRRNA) has biased composition (basic and acidic residues). Low complexity predominate over residues 1958–1980 (SPYTSSSFSSSKSQSQPSSAVYS). The CORNR box 1 motif lies at 2012-2016 (IDVII). Residues 2022–2109 (SDKDGRERNS…SPPQQTIPGH (88 aa)) are disordered. Positions 2031-2040 (SQSSDASSSH) are enriched in low complexity. Positions 2043–2052 (HRYEAPRETI) are enriched in basic and acidic residues. The segment covering 2093–2106 (RYRQQQESPPQQTI) has biased composition (polar residues). The short motif at 2123-2127 (ICHII) is the CORNR box 2 element. The span at 2136 to 2145 (PVNQPLQQPP) shows a compositional bias: low complexity. The disordered stretch occupies residues 2136 to 2222 (PVNQPLQQPP…PISPPQAPML (87 aa)). A compositionally biased stretch (polar residues) spans 2146–2175 (ASTFQSTNPTSTAVRTKASSRFSPESQVQP). Positions 2190 to 2209 (IPDKPRGRPGKSPDRGHISE) are enriched in basic and acidic residues. The CORNR box 3 motif lies at 2326 to 2330 (LEDII). Disordered regions lie at residues 2344–2446 (DHGV…YNPL) and 2464–2498 (TSMT…DSDE). The span at 2353–2362 (QGNQSGTPNS) shows a compositional bias: polar residues. Residues 2380–2394 (HKQKLISKYGSRKTK) are compositionally biased toward basic residues. Composition is skewed to polar residues over residues 2464–2476 (TSMT…QQSR) and 2489–2498 (QYETLSDSDE).

This sequence belongs to the N-CoR nuclear receptor corepressors family. Forms a large corepressor complex that contains sin3a/b, histone deacetylases hdac1 and hdac2, rbbp4 and possibly rbbp7. Interacts with the thyroid receptor (TR, composed of rxra and thrb) and the retinoid acid receptor (RAR, composed of rxra and rara) in the absence of ligand. Interacts with tbl1xr1-A and possibly tbl1xr1-B. Interacts with zbtb33/kaiso.

It is found in the nucleus. Mediates transcriptional repression by certain nuclear receptors. Participates in complexes which promote histone deacetylation and the formation of repressive chromatin structures which may impede access by the basal transcription machinery. In association with hdac3, may play a role in the regulation of the circadian clock. This is Nuclear receptor corepressor 1 (ncor1) from Xenopus laevis (African clawed frog).